We begin with the raw amino-acid sequence, 362 residues long: tRNA-specific 2-thiouridylase MnmA (362 aa).

Residues 8 to 15 and Met-35 each bind ATP; that span reads AMSGGVDS. An interaction with target base in tRNA region spans residues 95–97; that stretch reads NPD. Cys-100 acts as the Nucleophile in catalysis. The cysteines at positions 100 and 196 are disulfide-linked. Gly-124 provides a ligand contact to ATP. An interaction with tRNA region spans residues 146-148; that stretch reads KDQ. Cys-196 functions as the Cysteine persulfide intermediate in the catalytic mechanism. An interaction with tRNA region spans residues 303 to 304; the sequence is RY.

The protein belongs to the MnmA/TRMU family.

It localises to the cytoplasm. The enzyme catalyses S-sulfanyl-L-cysteinyl-[protein] + uridine(34) in tRNA + AH2 + ATP = 2-thiouridine(34) in tRNA + L-cysteinyl-[protein] + A + AMP + diphosphate + H(+). Its function is as follows. Catalyzes the 2-thiolation of uridine at the wobble position (U34) of tRNA, leading to the formation of s(2)U34. This chain is tRNA-specific 2-thiouridylase MnmA, found in Chlamydia abortus (strain DSM 27085 / S26/3) (Chlamydophila abortus).